The sequence spans 332 residues: Adenine deaminase (332 aa).

H16, H18, and H196 together coordinate Zn(2+). The active-site Proton donor is the E199. Zn(2+) is bound at residue D277. Position 278 (D278) interacts with substrate.

Belongs to the metallo-dependent hydrolases superfamily. Adenosine and AMP deaminases family. Adenine deaminase type 2 subfamily. Zn(2+) is required as a cofactor.

The catalysed reaction is adenine + H2O + H(+) = hypoxanthine + NH4(+). In terms of biological role, catalyzes the hydrolytic deamination of adenine to hypoxanthine. Plays an important role in the purine salvage pathway and in nitrogen catabolism. This chain is Adenine deaminase, found in Acinetobacter baylyi (strain ATCC 33305 / BD413 / ADP1).